The primary structure comprises 324 residues: Quinolinate synthase (324 aa).

Residues H39 and S56 each contribute to the iminosuccinate site. C101 contributes to the [4Fe-4S] cluster binding site. Residues 127–129 and S144 contribute to the iminosuccinate site; that span reads YIN. C187 is a [4Fe-4S] cluster binding site. Iminosuccinate contacts are provided by residues 213–215 and T230; that span reads HPE. C280 serves as a coordination point for [4Fe-4S] cluster.

This sequence belongs to the quinolinate synthase family. Type 2 subfamily. The cofactor is [4Fe-4S] cluster.

Its subcellular location is the cytoplasm. It catalyses the reaction iminosuccinate + dihydroxyacetone phosphate = quinolinate + phosphate + 2 H2O + H(+). Its pathway is cofactor biosynthesis; NAD(+) biosynthesis; quinolinate from iminoaspartate: step 1/1. Catalyzes the condensation of iminoaspartate with dihydroxyacetone phosphate to form quinolinate. In Nostoc punctiforme (strain ATCC 29133 / PCC 73102), this protein is Quinolinate synthase.